The following is a 212-amino-acid chain: Pyridoxine/pyridoxamine 5'-phosphate oxidase (212 aa).

FMN-binding positions include 59–64 (RMVLMK), 74–75 (YS), Lys81, and Gln103. Lys64 serves as a coordination point for substrate. 2 residues coordinate substrate: Tyr121 and Arg125. Residues 138 to 139 (QS) and Trp183 contribute to the FMN site. 189-191 (RLH) is a binding site for substrate. FMN is bound at residue Arg193.

This sequence belongs to the pyridoxamine 5'-phosphate oxidase family. As to quaternary structure, homodimer. FMN is required as a cofactor.

The catalysed reaction is pyridoxamine 5'-phosphate + O2 + H2O = pyridoxal 5'-phosphate + H2O2 + NH4(+). The enzyme catalyses pyridoxine 5'-phosphate + O2 = pyridoxal 5'-phosphate + H2O2. It participates in cofactor metabolism; pyridoxal 5'-phosphate salvage; pyridoxal 5'-phosphate from pyridoxamine 5'-phosphate: step 1/1. The protein operates within cofactor metabolism; pyridoxal 5'-phosphate salvage; pyridoxal 5'-phosphate from pyridoxine 5'-phosphate: step 1/1. Its function is as follows. Catalyzes the oxidation of either pyridoxine 5'-phosphate (PNP) or pyridoxamine 5'-phosphate (PMP) into pyridoxal 5'-phosphate (PLP). The chain is Pyridoxine/pyridoxamine 5'-phosphate oxidase from Rhodopseudomonas palustris (strain BisB5).